A 476-amino-acid chain; its full sequence is Protein transport protein Sec61 subunit alpha isoform A (476 aa).

Residues 2–33 are Cytoplasmic-facing; the sequence is GIKFLEVIKPFCAVLPEIQKPERKIQFREKVL. Residues 34–53 form a helical membrane-spanning segment; it reads WTAITLFIFLVCCQIPLFGI. Over 54-76 the chain is Lumenal; the sequence is MSSDSADPFYWMRVILASNRGTL. A helical membrane pass occupies residues 77-96; sequence MELGISPIVTSGLIMQLLAG. Over 97–117 the chain is Cytoplasmic; the sequence is AKIIEVGDTPKDRALFNGAQK. Residues 118–138 form a helical membrane-spanning segment; it reads LFGMIITIGQSIVYVMTGMYG. Over 139–144 the chain is Lumenal; it reads DPSEMG. Residues 145-165 traverse the membrane as a helical segment; it reads AGICLLIIIQLFVAGLIVLLL. The Cytoplasmic segment spans residues 166–172; that stretch reads DELLQKG. Residues 173–193 traverse the membrane as a helical segment; it reads YGLGSGISLFIATNICETIVW. Residues 194 to 240 lie on the Lumenal side of the membrane; it reads KAFSPTTVNTGRGTEFEGAIIALFHLLATRTDKVRALREAFYRQNLP. A helical membrane pass occupies residues 241-261; it reads NLLNLIATVFVFAVVIYFQGF. The Cytoplasmic segment spans residues 262 to 288; the sequence is RVDLPIKSARYRGQYNTYPIKLFYTSN. A helical transmembrane segment spans residues 289–309; sequence IPIILQSALVSNLYVISQMLS. The Lumenal segment spans residues 310 to 354; the sequence is TRFSGNFLVNLLGTWSDTSTGGPARAYPVGGLCYFLSPPESFGSV. A helical transmembrane segment spans residues 355-375; sequence LDDPIHAAIYIVFMLGSCAFF. The Cytoplasmic portion of the chain corresponds to 376-420; it reads SKTWIEVSGSSAKDVAKQLKEQQMVMGGHRETSMVHELNRYIPTA. The helical transmembrane segment at 421 to 441 threads the bilayer; it reads AAFGGLCIGGLSVMADFLGAI. Over 442–445 the chain is Lumenal; the sequence is GSGT. A helical transmembrane segment spans residues 446–462; sequence GILLAVTIIYQYFEIFV. The Cytoplasmic portion of the chain corresponds to 463 to 476; the sequence is KEQSEMGSMGALLF.

This sequence belongs to the SecY/SEC61-alpha family. In terms of assembly, the SEC61 channel-forming translocon complex consists of channel-forming core components SEC61A1, SEC61B and SEC61G and different auxiliary components such as SEC62 and SEC63. The SEC61 channel associates with the multi-pass translocon (MPT) complex.

It is found in the endoplasmic reticulum membrane. Functionally, component of SEC61 channel-forming translocon complex that mediates transport of signal peptide-containing precursor polypeptides across the endoplasmic reticulum (ER). Forms a ribosome receptor and a gated pore in the ER membrane, both functions required for cotranslational translocation of nascent polypeptides. May cooperate with auxiliary protein SEC62, SEC63 and HSPA5/BiP to enable post-translational transport of small presecretory proteins. The SEC61 channel is also involved in ER membrane insertion of transmembrane proteins: it mediates membrane insertion of the first few transmembrane segments of proteins, while insertion of subsequent transmembrane regions of multi-pass membrane proteins is mediated by the multi-pass translocon (MPT) complex. The sequence is that of Protein transport protein Sec61 subunit alpha isoform A (sec61aa) from Oncorhynchus mykiss (Rainbow trout).